The primary structure comprises 184 residues: Fanconi anemia core complex-associated protein 20 (184 aa).

Disordered stretches follow at residues 1-30 (MEEERRLRGRLSRRRPPAGGGPPNCRPWFL) and 46-81 (TVGGNTDWTPNSQPLPPLPAFPSQESLPDPESTVPP). Residues 7 to 16 (LRGRLSRRRP) show a composition bias toward basic residues. A compositionally biased stretch (polar residues) spans 47–57 (VGGNTDWTPNS). A Phosphoserine modification is found at S119. The segment at 148 to 184 (LLNCPLCQKAFDPKLTQLDVDSHLAQCLAESTEDVVW) adopts a UBZ2-type zinc-finger fold. Zn(2+) is bound by residues C151, C154, H170, and C174.

Component of the Fanconi anemia (FA) complex. Interacts with FANCA; interaction is direct. Interacts with REV1.

Its subcellular location is the nucleus. The protein resides in the chromosome. In terms of biological role, component of the Fanconi anemia (FA) complex required to recruit the FA complex to DNA interstrand cross-links (ICLs) and promote ICLs repair. Following DNA damage recognizes and binds 'Lys-63'-linked ubiquitin generated by RNF8 at ICLs and recruits other components of the FA complex. Promotes translesion synthesis via interaction with REV1. The sequence is that of Fanconi anemia core complex-associated protein 20 from Rattus norvegicus (Rat).